The sequence spans 834 residues: Periplasmic nitrate reductase (834 aa).

Positions 1-29 (MKLSRREFAKANAAAIAAAAAGLPLASTA) form a signal peptide, tat-type signal. In terms of domain architecture, 4Fe-4S Mo/W bis-MGD-type spans 41 to 97 (LDWNKAPCRFCGTGCSVMVATRDNRVVATHGDVKAEVNRGLNCVKGYFLSKIMYGVD). [4Fe-4S] cluster contacts are provided by C48, C51, C55, and C83. Residues K85, Q152, N177, C181, 214–221 (WGSNMAEM), 245–249 (STFEH), 264–266 (QTD), M375, Q379, N485, 511–512 (SD), K534, D561, and 721–730 (TGRVLEHWHT) contribute to the Mo-bis(molybdopterin guanine dinucleotide) site. F797 is a substrate binding site. Mo-bis(molybdopterin guanine dinucleotide)-binding residues include N805 and K822.

Belongs to the prokaryotic molybdopterin-containing oxidoreductase family. NasA/NapA/NarB subfamily. In terms of assembly, component of the periplasmic nitrate reductase NapAB complex composed of NapA and NapB. [4Fe-4S] cluster is required as a cofactor. It depends on Mo-bis(molybdopterin guanine dinucleotide) as a cofactor. In terms of processing, predicted to be exported by the Tat system. The position of the signal peptide cleavage has not been experimentally proven.

The protein localises to the periplasm. The catalysed reaction is 2 Fe(II)-[cytochrome] + nitrate + 2 H(+) = 2 Fe(III)-[cytochrome] + nitrite + H2O. Catalytic subunit of the periplasmic nitrate reductase complex NapAB. Receives electrons from NapB and catalyzes the reduction of nitrate to nitrite. This Ectopseudomonas mendocina (strain ymp) (Pseudomonas mendocina) protein is Periplasmic nitrate reductase.